Here is a 314-residue protein sequence, read N- to C-terminus: 4-hydroxy-3-methylbut-2-enyl diphosphate reductase (314 aa).

Cys-12 lines the [4Fe-4S] cluster pocket. (2E)-4-hydroxy-3-methylbut-2-enyl diphosphate-binding residues include His-41 and His-74. 2 residues coordinate dimethylallyl diphosphate: His-41 and His-74. Positions 41 and 74 each coordinate isopentenyl diphosphate. A [4Fe-4S] cluster-binding site is contributed by Cys-96. His-124 is a binding site for (2E)-4-hydroxy-3-methylbut-2-enyl diphosphate. His-124 is a binding site for dimethylallyl diphosphate. His-124 contributes to the isopentenyl diphosphate binding site. The Proton donor role is filled by Glu-126. Residue Thr-167 coordinates (2E)-4-hydroxy-3-methylbut-2-enyl diphosphate. Cys-197 serves as a coordination point for [4Fe-4S] cluster. The (2E)-4-hydroxy-3-methylbut-2-enyl diphosphate site is built by Ser-225, Ser-226, Asn-227, and Ser-269. Dimethylallyl diphosphate contacts are provided by Ser-225, Ser-226, Asn-227, and Ser-269. Isopentenyl diphosphate contacts are provided by Ser-225, Ser-226, Asn-227, and Ser-269.

The protein belongs to the IspH family. Requires [4Fe-4S] cluster as cofactor.

It catalyses the reaction isopentenyl diphosphate + 2 oxidized [2Fe-2S]-[ferredoxin] + H2O = (2E)-4-hydroxy-3-methylbut-2-enyl diphosphate + 2 reduced [2Fe-2S]-[ferredoxin] + 2 H(+). The catalysed reaction is dimethylallyl diphosphate + 2 oxidized [2Fe-2S]-[ferredoxin] + H2O = (2E)-4-hydroxy-3-methylbut-2-enyl diphosphate + 2 reduced [2Fe-2S]-[ferredoxin] + 2 H(+). It functions in the pathway isoprenoid biosynthesis; dimethylallyl diphosphate biosynthesis; dimethylallyl diphosphate from (2E)-4-hydroxy-3-methylbutenyl diphosphate: step 1/1. It participates in isoprenoid biosynthesis; isopentenyl diphosphate biosynthesis via DXP pathway; isopentenyl diphosphate from 1-deoxy-D-xylulose 5-phosphate: step 6/6. In terms of biological role, catalyzes the conversion of 1-hydroxy-2-methyl-2-(E)-butenyl 4-diphosphate (HMBPP) into a mixture of isopentenyl diphosphate (IPP) and dimethylallyl diphosphate (DMAPP). Acts in the terminal step of the DOXP/MEP pathway for isoprenoid precursor biosynthesis. The protein is 4-hydroxy-3-methylbut-2-enyl diphosphate reductase of Haemophilus influenzae (strain PittEE).